A 396-amino-acid chain; its full sequence is Activity-regulated cytoskeleton-associated protein (396 aa).

Residues 54–78 (SKQVERELKGLHRSVGKLENNLDGY) are a coiled coil. The segment at 89-100 (KSIKACLCRCQE) is interaction with SH3GL1 or SH3GL3. Positions 195 to 214 (QSWVPGEDGQPSPGVDTQIF) are interaction with DNM2. S260 is subject to Phosphoserine. Glycyl lysine isopeptide (Lys-Gly) (interchain with G-Cter in ubiquitin) cross-links involve residues K268 and K269. T278 is subject to Phosphothreonine. The disordered stretch occupies residues 358–396 (GLEQAAEPSVTPLPTEDETEALTPALTSESVASDRTQPE). The span at 382–396 (ALTSESVASDRTQPE) shows a compositional bias: polar residues.

Belongs to the ARC/ARG3.1 family. In terms of assembly, homooligomer; homooligomerizes into virion-like capsids. Interacts with SH3GL1/endophilin-2, SH3GL3/endophilin-3 and DNM2/DYN2. Interacts with CAMK2B (in the kinase inactive state); leading to target ARC to inactive synapses. Interacts with PSEN1. Interacts with GRIN2A and GRIN2B; inhibiting homooligomerization. In terms of processing, palmitoylation anchors the protein into the membrane by allowing direct insertion into the hydrophobic core of the lipid bilayer. Post-translationally, ubiquitinated by UBE3A, leading to its degradation by the proteasome, thereby promoting AMPA receptors (AMPARs) expression at synapses. Ubiquitinated by RNF216 at Lys-268 and Lys-269 limiting ARC protein levels induced by synaptic activity and thus regulating ARC-dependent forms of synaptic plasticity. Phosphorylation at Ser-260 by CaMK2 prevents homooligomerization into virion-like capsids by disrupting an interaction surface essential for high-order oligomerization. Phosphorylation by CaMK2 inhibits synaptic activity. As to expression, expressed exclusively in certain parts of the brain including cortex and molecular layer of the hippocampus. Typically expressed at high level in a minority of neurons. Basal expression higher in cortex than in hippocampus, highest in visual cortex.

The protein localises to the extracellular vesicle membrane. It is found in the postsynaptic cell membrane. The protein resides in the synapse. Its subcellular location is the postsynaptic density. It localises to the early endosome membrane. The protein localises to the cell projection. It is found in the dendrite. The protein resides in the cytoplasm. Its subcellular location is the cytoskeleton. It localises to the cell cortex. The protein localises to the dendritic spine. It is found in the cytoplasmic vesicle. The protein resides in the secretory vesicle. Its subcellular location is the acrosome. It localises to the clathrin-coated vesicle membrane. Master regulator of synaptic plasticity that self-assembles into virion-like capsids that encapsulate RNAs and mediate intercellular RNA transfer in the nervous system. ARC protein is released from neurons in extracellular vesicles that mediate the transfer of ARC mRNA into new target cells, where ARC mRNA can undergo activity-dependent translation. ARC capsids are endocytosed and are able to transfer ARC mRNA into the cytoplasm of neurons. Acts as a key regulator of synaptic plasticity: required for protein synthesis-dependent forms of long-term potentiation (LTP) and depression (LTD) and for the formation of long-term memory. Regulates synaptic plasticity by promoting endocytosis of AMPA receptors (AMPARs) in response to synaptic activity: this endocytic pathway maintains levels of surface AMPARs in response to chronic changes in neuronal activity through synaptic scaling, thereby contributing to neuronal homeostasis. Acts as a postsynaptic mediator of activity-dependent synapse elimination in the developing cerebellum by mediating elimination of surplus climbing fiber synapses. Accumulates at weaker synapses, probably to prevent their undesired enhancement. This suggests that ARC-containing virion-like capsids may be required to eliminate synaptic material. Required to transduce experience into long-lasting changes in visual cortex plasticity and for long-term memory. Involved in postsynaptic trafficking and processing of amyloid-beta A4 (APP) via interaction with PSEN1. In addition to its role in synapses, also involved in the regulation of the immune system: specifically expressed in skin-migratory dendritic cells and regulates fast dendritic cell migration, thereby regulating T-cell activation. The chain is Activity-regulated cytoskeleton-associated protein from Rattus norvegicus (Rat).